The primary structure comprises 34 residues: Photosystem II reaction center protein M (34 aa).

A helical membrane pass occupies residues 7-27 (GFVASLLFILVPAIFLIVLYI).

Belongs to the PsbM family. As to quaternary structure, PSII is composed of 1 copy each of membrane proteins PsbA, PsbB, PsbC, PsbD, PsbE, PsbF, PsbH, PsbI, PsbJ, PsbK, PsbL, PsbM, PsbT, PsbX, PsbY, PsbZ, Psb30/Ycf12, peripheral proteins PsbO, CyanoQ (PsbQ), PsbU, PsbV and a large number of cofactors. It forms dimeric complexes.

Its subcellular location is the cellular thylakoid membrane. In terms of biological role, one of the components of the core complex of photosystem II (PSII). PSII is a light-driven water:plastoquinone oxidoreductase that uses light energy to abstract electrons from H(2)O, generating O(2) and a proton gradient subsequently used for ATP formation. It consists of a core antenna complex that captures photons, and an electron transfer chain that converts photonic excitation into a charge separation. This subunit is found at the monomer-monomer interface. The chain is Photosystem II reaction center protein M from Parasynechococcus marenigrum (strain WH8102).